The chain runs to 395 residues: MDFNMKKLASDAGIFFTRAVQFTEEKFGQAEKTELDAHFENLLARADSTKNWTEKILRQTEVLLQPNPSARVEEFLYEKLDRKVPSRVTNGELLAQYMADAASELGPTTPYGKTLIKVAEAEKQLGAAERDFIHTASISFLTPLRNFLEGDWKTISKERRLLQNRRLDLDACKARLKKAKAAEAKATTVPDFQETRPRNYILSASASALWNDEVDKAEQELRVAQTEFDRQAEVTRLLLEGISSTHVNHLRCLHEFVKSQTTYYAQCYRHMLDLQKQLGRFPGTFVGTTEPASPPLSSTSPTTAAATMPVVPSVASLAPPGEASLCLEEVAPPASGTRKARVLYDYEAADSSELALLADELITVYSLPGMDPDWLIGERGNKKGKVPVTYLELLS.

Residue Met1 is modified to N-acetylmethionine. Residues 1–27 (MDFNMKKLASDAGIFFTRAVQFTEEKF) form a membrane-binding amphipathic helix region. Ser10 is subject to Phosphoserine. The BAR domain maps to 24-287 (EEKFGQAEKT…LGRFPGTFVG (264 aa)). Coiled-coil stretches lie at residues 116–132 (IKVAEAEKQLGAAERDF) and 206–240 (ASALWNDEVDKAEQELRVAQTEFDRQAEVTRLLLE). One can recognise an SH3 domain in the interval 335–395 (SGTRKARVLY…VPVTYLELLS (61 aa)). Ser395 bears the Phosphoserine mark.

The protein belongs to the endophilin family. As to quaternary structure, homodimer, and heterodimer with SH3GLB1. Detected in skeletal muscle, adipocyte, brain, lung, colon and mammary gland.

Its subcellular location is the cytoplasm. This chain is Endophilin-B2 (SH3GLB2), found in Homo sapiens (Human).